We begin with the raw amino-acid sequence, 56 residues long: Large ribosomal subunit protein eL37 (56 aa).

Cys19, Cys22, Cys34, and Cys37 together coordinate Zn(2+). The C4-type zinc-finger motif lies at Cys19–Cys37.

This sequence belongs to the eukaryotic ribosomal protein eL37 family. The cofactor is Zn(2+).

Binds to the 23S rRNA. This chain is Large ribosomal subunit protein eL37, found in Methanococcoides burtonii (strain DSM 6242 / NBRC 107633 / OCM 468 / ACE-M).